Consider the following 275-residue polypeptide: Phosphate import ATP-binding protein PstB (275 aa).

The region spanning 29 to 270 (VSVRDLNFYY…PTDRRTQDYI (242 aa)) is the ABC transporter domain. Residue 61 to 68 (GPSGCGKS) coordinates ATP.

Belongs to the ABC transporter superfamily. Phosphate importer (TC 3.A.1.7) family. In terms of assembly, the complex is composed of two ATP-binding proteins (PstB), two transmembrane proteins (PstC and PstA) and a solute-binding protein (PstS).

The protein localises to the cell inner membrane. It carries out the reaction phosphate(out) + ATP + H2O = ADP + 2 phosphate(in) + H(+). Its function is as follows. Part of the ABC transporter complex PstSACB involved in phosphate import. Responsible for energy coupling to the transport system. The polypeptide is Phosphate import ATP-binding protein PstB (Rhodopseudomonas palustris (strain BisB18)).